Consider the following 344-residue polypeptide: Phenylalanine--tRNA ligase alpha subunit (344 aa).

Residue E256 participates in Mg(2+) binding.

The protein belongs to the class-II aminoacyl-tRNA synthetase family. Phe-tRNA synthetase alpha subunit type 1 subfamily. As to quaternary structure, tetramer of two alpha and two beta subunits. It depends on Mg(2+) as a cofactor.

The protein localises to the cytoplasm. It carries out the reaction tRNA(Phe) + L-phenylalanine + ATP = L-phenylalanyl-tRNA(Phe) + AMP + diphosphate + H(+). The polypeptide is Phenylalanine--tRNA ligase alpha subunit (Shouchella clausii (strain KSM-K16) (Alkalihalobacillus clausii)).